The chain runs to 598 residues: 2-succinyl-5-enolpyruvyl-6-hydroxy-3-cyclohexene-1-carboxylate synthase (598 aa).

The protein belongs to the TPP enzyme family. MenD subfamily. In terms of assembly, homodimer. The cofactor is Mg(2+). Mn(2+) serves as cofactor. Thiamine diphosphate is required as a cofactor.

The catalysed reaction is isochorismate + 2-oxoglutarate + H(+) = 5-enolpyruvoyl-6-hydroxy-2-succinyl-cyclohex-3-ene-1-carboxylate + CO2. It participates in quinol/quinone metabolism; 1,4-dihydroxy-2-naphthoate biosynthesis; 1,4-dihydroxy-2-naphthoate from chorismate: step 2/7. It functions in the pathway cofactor biosynthesis; phylloquinone biosynthesis. Its function is as follows. Catalyzes the thiamine diphosphate-dependent decarboxylation of 2-oxoglutarate and the subsequent addition of the resulting succinic semialdehyde-thiamine pyrophosphate anion to isochorismate to yield 2-succinyl-5-enolpyruvyl-6-hydroxy-3-cyclohexene-1-carboxylate (SEPHCHC). The chain is 2-succinyl-5-enolpyruvyl-6-hydroxy-3-cyclohexene-1-carboxylate synthase from Prochlorococcus marinus (strain NATL2A).